The sequence spans 655 residues: p-hydroxybenzoic acid efflux pump subunit AaeB (655 aa).

11 helical membrane-spanning segments follow: residues 13-33, 38-58, 69-89, 93-113, 121-141, 152-172, 370-390, 407-427, 431-451, 459-479, and 482-502; these read FAVK…HFQL, WAVL…GGEP, LRII…IAMI, LLMI…SSLV, WGLA…EPLL, EIVI…PRSI, LFWL…IAVV, FIYG…VIIP, QSML…GIEV, MGAL…TFHF, and FLDS…VILL.

This sequence belongs to the aromatic acid exporter ArAE (TC 2.A.85) family.

It localises to the cell inner membrane. Functionally, forms an efflux pump with AaeA. Could function as a metabolic relief valve, allowing to eliminate certain compounds when they accumulate to high levels in the cell. This chain is p-hydroxybenzoic acid efflux pump subunit AaeB, found in Escherichia coli (strain K12 / MC4100 / BW2952).